The following is a 65-amino-acid chain: Small ribosomal subunit protein bS21 (65 aa).

The protein belongs to the bacterial ribosomal protein bS21 family.

This chain is Small ribosomal subunit protein bS21, found in Flavobacterium psychrophilum (strain ATCC 49511 / DSM 21280 / CIP 103535 / JIP02/86).